The following is a 518-amino-acid chain: Pre-glycoprotein polyprotein GP complex (518 aa).

The N-myristoyl glycine; by host moiety is linked to residue glycine 2. The Extracellular segment spans residues 2–17 (GQVIGFFQSLPNIINE). Residues 18 to 33 (ALNIALICVALIAILK) form a helical membrane-spanning segment. Over 34-58 (GIVNIWKSGLIQLFIFLILAGRSCS) the chain is Cytoplasmic. Cysteine 57 is a Zn(2+) binding site. Topologically, residues 59-456 (HTFQIGRNHE…QGSTPLSLVD (398 aa)) are extracellular. 4 cysteine pairs are disulfide-bonded: cysteine 87–cysteine 258, cysteine 303–cysteine 316, cysteine 325–cysteine 334, and cysteine 388–cysteine 409. Asparagine 90, asparagine 112, asparagine 127, asparagine 180, and asparagine 251 each carry an N-linked (GlcNAc...) asparagine; by host glycan. Residues asparagine 389, asparagine 397, asparagine 414, and asparagine 419 are each glycosylated (N-linked (GlcNAc...) asparagine; by host). A helical membrane pass occupies residues 457 to 477 (LCFWSTLFYVTTLFAHLVGFP). At 478–518 (THRHILDGPCPKPHRLTKKGICSCGHFGIPGKPVRWVKRSR) the chain is on the cytoplasmic side. Zn(2+) contacts are provided by histidine 479, histidine 481, cysteine 487, histidine 491, cysteine 499, and cysteine 501.

The protein belongs to the arenaviridae GPC protein family. In terms of assembly, interacts with glycoprotein G2. Part of the GP complex (GP-C) together with glycoprotein G1 and glycoprotein G2. The GP-complex interacts with protein Z, which interacts with ribonucleocapsid; these interactions may induce virion budding. As to quaternary structure, homotrimer; disulfide-linked. In pre-fusion state, G1 homotrimers bind G2 homotrimers via ionic interactions. Part of the GP complex (GP-C) together with glycoprotein G2 and the stable signal peptide. The GP-complex interacts with protein Z, which interacts with ribonucleocapsid; these interactions may induce virion budding. Homotrimer. Interacts with the stable signal peptide. In pre-fusion state, G2 homotrimers bind G1 homotrimers via ionic interactions. Part of the GP complex (GP-C) together with glycoprotein G1 and the stable signal peptide. Acidification in the endosome triggers rearrangements, which ultimately leads to a 6 helix bundle formed by the two heptad repeat domains (HR1 and HR2) in post-fusion state. The GP-complex interacts with protein Z, which interacts with ribonucleocapsid; these interactions may induce virion budding. In terms of processing, specific enzymatic cleavages in vivo yield mature proteins. GP-C polyprotein is cleaved in the endoplasmic reticulum by the host protease MBTPS1. Only cleaved glycoprotein is incorporated into virions. The SSP remains stably associated with the GP complex following cleavage by signal peptidase and plays crucial roles in the trafficking of GP through the secretory pathway. Post-translationally, myristoylation is necessary for GP2-mediated fusion activity.

The protein localises to the virion membrane. It localises to the host endoplasmic reticulum membrane. The protein resides in the host Golgi apparatus membrane. Its subcellular location is the host cell membrane. Functions as a cleaved signal peptide that is retained as the third component of the GP complex (GP-C). Helps to stabilize the spike complex in its native conformation. The SSP is required for efficient glycoprotein expression, post-translational maturation cleavage of G1 and G2, glycoprotein transport to the cell surface plasma membrane, formation of infectious virus particles, and acid pH-dependent glycoprotein-mediated cell fusion. Functionally, forms the virion spikes together with glycoprotein G2. The glycoprotein spike trimers are connected to the underlying matrix. Mediates virus attachment to host receptor alpha-dystroglycan DAG1. This attachment induces virion internalization predominantly through clathrin- and caveolin-independent endocytosis. In terms of biological role, forms the virion spikes together with glycoprotein G1. The glycoprotein spike trimers are connected to the underlying matrix. Class I viral fusion protein that directs fusion of viral and host endosomal membranes, leading to delivery of the nucleocapsid into the cytoplasm. Membrane fusion is mediated by irreversible conformational changes induced by acidification. The protein is Pre-glycoprotein polyprotein GP complex of Bolomys (OLVV).